A 236-amino-acid chain; its full sequence is Thylakoid lumenal 17.4 kDa protein, chloroplastic (236 aa).

Pentapeptide repeat domains follow at residues 124–163 and 169–208; these read TNLKGKTLSAALMVGAKFDGADMTEVVMSKAYAVEASFKG and AVIDRVNFGKSNLKGAVFRNTVLSGSTFEEANLEDVVFED.

Interacts in vitro with LTO1.

It localises to the plastid. Its subcellular location is the chloroplast thylakoid lumen. The chain is Thylakoid lumenal 17.4 kDa protein, chloroplastic from Arabidopsis thaliana (Mouse-ear cress).